The chain runs to 443 residues: Xaa-Pro dipeptidase (443 aa).

Mn(2+) contacts are provided by Asp246, Asp257, His339, Glu384, and Glu423.

Belongs to the peptidase M24B family. Bacterial-type prolidase subfamily. The cofactor is Mn(2+).

The enzyme catalyses Xaa-L-Pro dipeptide + H2O = an L-alpha-amino acid + L-proline. Splits dipeptides with a prolyl residue in the C-terminal position. This chain is Xaa-Pro dipeptidase, found in Salmonella paratyphi B (strain ATCC BAA-1250 / SPB7).